The sequence spans 301 residues: Protein translocase subunit SecF (301 aa).

6 consecutive transmembrane segments (helical) span residues 17 to 37 (YIALALSCIMIILGIFAIFQI), 137 to 157 (DALFAILAATAGILIYIAIRF), 163 to 183 (IGATVATFHDVMAVLGIFYIL), 190 to 210 (IFISALLTIAGYSLTDTVVVF), 239 to 261 (LSRTIVTSLTTLMAAVALFFFGG), and 272 to 292 (ILGILVGTYSSIFVASPVVLL).

This sequence belongs to the SecD/SecF family. SecF subfamily. In terms of assembly, forms a complex with SecD. Part of the essential Sec protein translocation apparatus which comprises SecA, SecYEG and auxiliary proteins SecDF. Other proteins may also be involved.

Its subcellular location is the cell inner membrane. Part of the Sec protein translocase complex. Interacts with the SecYEG preprotein conducting channel. SecDF uses the proton motive force (PMF) to complete protein translocation after the ATP-dependent function of SecA. The chain is Protein translocase subunit SecF from Thermodesulfovibrio yellowstonii (strain ATCC 51303 / DSM 11347 / YP87).